The chain runs to 292 residues: F-box only protein 16 (292 aa).

The F-box domain maps to 86 to 132 (LDFTTKLPRVLSLYIFSFLDPRSLCRCAQVCWHWKNLAELDQLWMLK). 2 disordered regions span residues 188–224 (SPEE…SSDK) and 238–292 (RDPM…PLCP). The segment covering 194–204 (SPLSAFRSSSS) has biased composition (low complexity). A compositionally biased stretch (basic and acidic residues) spans 260–273 (RQSHDKKNKLQDRT).

Part of a SCF (SKP1-cullin-F-box) protein ligase complex. As to expression, expressed in heart, spleen and colon.

Functionally, probably recognizes and binds to some phosphorylated proteins and promotes their ubiquitination and degradation. This Homo sapiens (Human) protein is F-box only protein 16 (FBXO16).